Consider the following 224-residue polypeptide: Elongation factor 1-beta (224 aa).

It belongs to the EF-1-beta/EF-1-delta family. In terms of assembly, EF-1 is composed of 4 subunits: alpha, beta (1B-alpha=beta'), delta (1B-beta), and gamma (1B-gamma).

Functionally, EF-1-beta and EF-1-beta' stimulate the exchange of GDP bound to EF-1-alpha to GTP. This chain is Elongation factor 1-beta, found in Oryza sativa subsp. japonica (Rice).